Reading from the N-terminus, the 123-residue chain is Small ribosomal subunit protein uS12 (123 aa).

At aspartate 89 the chain carries 3-methylthioaspartic acid.

This sequence belongs to the universal ribosomal protein uS12 family. In terms of assembly, part of the 30S ribosomal subunit. Contacts proteins S8 and S17. May interact with IF1 in the 30S initiation complex.

Its function is as follows. With S4 and S5 plays an important role in translational accuracy. In terms of biological role, interacts with and stabilizes bases of the 16S rRNA that are involved in tRNA selection in the A site and with the mRNA backbone. Located at the interface of the 30S and 50S subunits, it traverses the body of the 30S subunit contacting proteins on the other side and probably holding the rRNA structure together. The combined cluster of proteins S8, S12 and S17 appears to hold together the shoulder and platform of the 30S subunit. The protein is Small ribosomal subunit protein uS12 of Nitrobacter hamburgensis (strain DSM 10229 / NCIMB 13809 / X14).